A 772-amino-acid polypeptide reads, in one-letter code: Mitochondrial intermediate peptidase (772 aa).

The N-terminal 33 residues, 1–33 (MLARPSTTVLARRPFFRFRGCLNEPRPTKARCL), are a transit peptide targeting the mitochondrion. H556 is a binding site for Zn(2+). E557 is a catalytic residue. Zn(2+) contacts are provided by H560 and H563.

The protein belongs to the peptidase M3 family. It depends on Zn(2+) as a cofactor.

The protein resides in the mitochondrion matrix. The catalysed reaction is Release of an N-terminal octapeptide as second stage of processing of some proteins imported into the mitochondrion.. Cleaves proteins, imported into the mitochondrion, to their mature size. While most mitochondrial precursor proteins are processed to the mature form in one step by mitochondrial processing peptidase (MPP), the sequential cleavage by MIP of an octapeptide after initial processing by MPP is a required step for a subgroup of nuclear-encoded precursor proteins destined for the matrix or the inner membrane. The protein is Mitochondrial intermediate peptidase (OCT1) of Coprinopsis scobicola (Ink cap fungus).